Consider the following 748-residue polypeptide: Polyribonucleotide nucleotidyltransferase (748 aa).

Asp487 and Asp493 together coordinate Mg(2+). The 60-residue stretch at 554–613 (PSTTTIKIDKDKIRDIIGPGGKVIKEICETSGAKIDISDDGTVSVYASDRDKLKVALDKI) folds into the KH domain. The S1 motif domain maps to 623–691 (GEIFNGTVVK…NKGKAKLTIK (69 aa)). The tract at residues 695-733 (KDKFSNNTKPKTSVNNTKDNSEPEQRHDSSKKRAWNEDN) is disordered. Residues 699-712 (SNNTKPKTSVNNTK) show a composition bias toward polar residues. Residues 713 to 722 (DNSEPEQRHD) show a composition bias toward basic and acidic residues.

Belongs to the polyribonucleotide nucleotidyltransferase family. Requires Mg(2+) as cofactor.

The protein resides in the cytoplasm. The catalysed reaction is RNA(n+1) + phosphate = RNA(n) + a ribonucleoside 5'-diphosphate. In terms of biological role, involved in mRNA degradation. Catalyzes the phosphorolysis of single-stranded polyribonucleotides processively in the 3'- to 5'-direction. The protein is Polyribonucleotide nucleotidyltransferase of Rickettsia rickettsii (strain Iowa).